The sequence spans 178 residues: Gamma-crystallin S (178 aa).

The residue at position 2 (Ser-2) is an N-acetylserine. Residues 2-5 (SKTG) are N-terminal arm. 2 consecutive Beta/gamma crystallin 'Greek key' domains span residues 6-44 (TKITFYEDKNFQGRRYDCDCDCADFHTYLSRCNSIKVEG) and 45-87 (GTWA…RAVH). The segment at 88 to 93 (LPSGGQ) is connecting peptide. Beta/gamma crystallin 'Greek key' domains lie at 94-134 (YKIQ…KVLE) and 135-177 (GVWI…RRIV).

It belongs to the beta/gamma-crystallin family. In terms of assembly, monomer.

Its function is as follows. Crystallins are the dominant structural components of the vertebrate eye lens. The chain is Gamma-crystallin S (CRYGS) from Homo sapiens (Human).